Here is a 424-residue protein sequence, read N- to C-terminus: Adenylosuccinate synthetase 1 (424 aa).

GTP is bound by residues 12-18 (GDEGKGK) and 40-42 (GHT). Aspartate 13 serves as the catalytic Proton acceptor. Residues aspartate 13 and glycine 40 each coordinate Mg(2+). Residues 13–16 (DEGK), 38–41 (NAGH), threonine 127, arginine 141, threonine 236, and arginine 304 each bind IMP. The active-site Proton donor is the histidine 41. 300-306 (ARTGRPR) is a binding site for substrate. GTP-binding positions include arginine 306, 332–334 (KLD), and 413–415 (GVG).

This sequence belongs to the adenylosuccinate synthetase family. In terms of assembly, homodimer. Requires Mg(2+) as cofactor.

Its subcellular location is the cytoplasm. It catalyses the reaction IMP + L-aspartate + GTP = N(6)-(1,2-dicarboxyethyl)-AMP + GDP + phosphate + 2 H(+). Its pathway is purine metabolism; AMP biosynthesis via de novo pathway; AMP from IMP: step 1/2. Its function is as follows. Plays an important role in the de novo pathway of purine nucleotide biosynthesis. Catalyzes the first committed step in the biosynthesis of AMP from IMP. This chain is Adenylosuccinate synthetase 1, found in Methanosarcina acetivorans (strain ATCC 35395 / DSM 2834 / JCM 12185 / C2A).